We begin with the raw amino-acid sequence, 90 residues long: MKKKGGRKIFGFMVKEEKEENRGSVEFQVFSFTNKIRRLASHLELHKKDFSSERGLRRLLGKRQRLLAYLAKKNRVRYKKLISQLDIREK.

Belongs to the universal ribosomal protein uS15 family. Part of the 30S ribosomal subunit.

The protein localises to the plastid. The protein resides in the chloroplast. The sequence is that of Small ribosomal subunit protein uS15c (rps15-A) from Zea mays (Maize).